The chain runs to 318 residues: Rhomboid-related protein 4 (318 aa).

Over 1–21 the chain is Cytoplasmic; that stretch reads MQRRSRGINTGLILLLSQIFH. The chain crosses the membrane as a helical span at residues 22–42; it reads VGINNIPPVTLATLALNIWFF. Residues 43 to 106 lie on the Extracellular side of the membrane; that stretch reads LNPQKPLYSS…RRLGSRWFAY (64 aa). Residues 107–127 form a helical membrane-spanning segment; that stretch reads VITTFSVLTGVVYLLLQFAVA. At 128–137 the chain is on the cytoplasmic side; it reads EFMDEPDFKR. Residues 138–154 traverse the membrane as a helical segment; that stretch reads SCAVGFSGVLFALKVLN. The active-site Nucleophile is the S144. Topologically, residues 155–179 are extracellular; the sequence is NHYCPGGFVNILGFPVPNRFACWVE. The helical transmembrane segment at 180–204 threads the bilayer; the sequence is LVAIHLFSPGTSFAGHQAGILVGLM. H195 is an active-site residue. Residues 205–318 are Cytoplasmic-facing; that stretch reads YTQGPLKKIM…RQRLHRFDSQ (114 aa). The tract at residues 271–286 is ubiquitin-binding domain (UBD); sequence SEEEQLERALQASLWD. A disordered region spans residues 285–318; that stretch reads WDRGHTRNSPPPYGFHLSPEEEMRRQRLHRFDSQ. Residues 302 to 318 are compositionally biased toward basic and acidic residues; that stretch reads SPEEEMRRQRLHRFDSQ. The interval 303–318 is VCP/p97-interacting motif (VIM); the sequence is PEEEMRRQRLHRFDSQ.

Belongs to the peptidase S54 family. In terms of assembly, interacts with BIK and STEAP3. Interacts (via C-terminal domain) with VCP. Interacts with ubiquitin and ubiquitinated proteins.

It is found in the endoplasmic reticulum membrane. The protein resides in the mitochondrion membrane. The catalysed reaction is Cleaves type-1 transmembrane domains using a catalytic dyad composed of serine and histidine that are contributed by different transmembrane domains.. With respect to regulation, inhibited by aprotinin. Its function is as follows. Intramembrane-cleaving serine protease that cleaves single transmembrane or multi-pass membrane proteins in the hydrophobic plane of the membrane, luminal loops and juxtamembrane regions. Involved in regulated intramembrane proteolysis and the subsequent release of functional polypeptides from their membrane anchors. Functional component of endoplasmic reticulum-associated degradation (ERAD) for misfolded membrane proteins. Required for the degradation process of some specific misfolded endoplasmic reticulum (ER) luminal proteins. Participates in the transfer of misfolded proteins from the ER to the cytosol, where they are destroyed by the proteasome in a ubiquitin-dependent manner. Functions in BIK, MPZ, PKD1, PTCRA, RHO, STEAP3 and TRAC processing. Involved in the regulation of exosomal secretion; inhibits the TSAP6-mediated secretion pathway. Involved in the regulation of apoptosis; modulates BIK-mediated apoptotic activity. Also plays a role in the regulation of spermatogenesis; inhibits apoptotic activity in spermatogonia. This is Rhomboid-related protein 4 (RHBDD1) from Pongo abelii (Sumatran orangutan).